Consider the following 1002-residue polypeptide: DNA-directed RNA polymerase 1B, mitochondrial (1002 aa).

The transit peptide at 1 to 21 directs the protein to the mitochondrion; it reads MWRYISKHAYSRKFRNSHDSA. Catalysis depends on residues Asp-703, Lys-778, and Asp-935.

Belongs to the phage and mitochondrial RNA polymerase family.

The protein localises to the mitochondrion. It carries out the reaction RNA(n) + a ribonucleoside 5'-triphosphate = RNA(n+1) + diphosphate. In terms of biological role, DNA-dependent RNA polymerase catalyzes the transcription of DNA into RNA using the four ribonucleoside triphosphates as substrates. In Nicotiana tabacum (Common tobacco), this protein is DNA-directed RNA polymerase 1B, mitochondrial (RPOT1-TOM).